The chain runs to 145 residues: Large ribosomal subunit protein uL16 (145 aa).

The span at 1 to 17 (MLMPKRVKHRKVQRGRM) shows a compositional bias: basic residues. The segment at 1–20 (MLMPKRVKHRKVQRGRMKGV) is disordered.

It belongs to the universal ribosomal protein uL16 family. As to quaternary structure, part of the 50S ribosomal subunit.

Its function is as follows. Binds 23S rRNA and is also seen to make contacts with the A and possibly P site tRNAs. This chain is Large ribosomal subunit protein uL16, found in Acetivibrio thermocellus (strain ATCC 27405 / DSM 1237 / JCM 9322 / NBRC 103400 / NCIMB 10682 / NRRL B-4536 / VPI 7372) (Clostridium thermocellum).